Reading from the N-terminus, the 488-residue chain is Solanidine UDP-glucose glucosyltransferase 1 (488 aa).

Histidine 23 serves as the catalytic Proton acceptor. Histidine 23 provides a ligand contact to an anthocyanidin. Aspartate 127 functions as the Charge relay in the catalytic mechanism. Residues valine 352, glutamine 354, histidine 369, asparagine 373, serine 374, and glutamate 377 each contribute to the UDP-alpha-D-glucose site. An anthocyanidin is bound at residue alanine 392. Residues aspartate 393 and glutamine 394 each contribute to the UDP-alpha-D-glucose site.

It belongs to the UDP-glycosyltransferase family. Expressed in the shoot apical meristem (SAM) and tuber.

It catalyses the reaction solasodine + UDP-alpha-D-glucose = solasodine 3-beta-D-glucoside + UDP + H(+). The catalysed reaction is solanidine + UDP-alpha-D-glucose = solanidine 3-O-beta-D-glucopyranoside + UDP + H(+). It carries out the reaction tomatidine + UDP-alpha-D-glucose = tomatidine 3-O-beta-D-glucopyranoside + UDP + H(+). Glucosyltransferase involved in the glucosylation of the steroidal alkaloid aglycons solanidine, solasodine and tomatidine to produce their corresponding glycoalkaloids. This is Solanidine UDP-glucose glucosyltransferase 1 from Solanum tuberosum (Potato).